Here is a 279-residue protein sequence, read N- to C-terminus: Acyl-[acyl-carrier-protein]--UDP-N-acetylglucosamine O-acyltransferase (279 aa).

It belongs to the transferase hexapeptide repeat family. LpxA subfamily. In terms of assembly, homotrimer.

It is found in the cytoplasm. It catalyses the reaction a (3R)-hydroxyacyl-[ACP] + UDP-N-acetyl-alpha-D-glucosamine = a UDP-3-O-[(3R)-3-hydroxyacyl]-N-acetyl-alpha-D-glucosamine + holo-[ACP]. It functions in the pathway glycolipid biosynthesis; lipid IV(A) biosynthesis; lipid IV(A) from (3R)-3-hydroxytetradecanoyl-[acyl-carrier-protein] and UDP-N-acetyl-alpha-D-glucosamine: step 1/6. In terms of biological role, involved in the biosynthesis of lipid A, a phosphorylated glycolipid that anchors the lipopolysaccharide to the outer membrane of the cell. The chain is Acyl-[acyl-carrier-protein]--UDP-N-acetylglucosamine O-acyltransferase from Mesorhizobium japonicum (strain LMG 29417 / CECT 9101 / MAFF 303099) (Mesorhizobium loti (strain MAFF 303099)).